Consider the following 109-residue polypeptide: Ribonuclease P protein component (109 aa).

It belongs to the RnpA family. In terms of assembly, consists of a catalytic RNA component (M1 or rnpB) and a protein subunit.

It catalyses the reaction Endonucleolytic cleavage of RNA, removing 5'-extranucleotides from tRNA precursor.. Its function is as follows. RNaseP catalyzes the removal of the 5'-leader sequence from pre-tRNA to produce the mature 5'-terminus. It can also cleave other RNA substrates such as 4.5S RNA. The protein component plays an auxiliary but essential role in vivo by binding to the 5'-leader sequence and broadening the substrate specificity of the ribozyme. This is Ribonuclease P protein component from Nitratiruptor sp. (strain SB155-2).